The following is a 111-amino-acid chain: Large ribosomal subunit protein uL22 (111 aa).

Belongs to the universal ribosomal protein uL22 family. As to quaternary structure, part of the 50S ribosomal subunit.

Functionally, this protein binds specifically to 23S rRNA; its binding is stimulated by other ribosomal proteins, e.g. L4, L17, and L20. It is important during the early stages of 50S assembly. It makes multiple contacts with different domains of the 23S rRNA in the assembled 50S subunit and ribosome. In terms of biological role, the globular domain of the protein is located near the polypeptide exit tunnel on the outside of the subunit, while an extended beta-hairpin is found that lines the wall of the exit tunnel in the center of the 70S ribosome. The chain is Large ribosomal subunit protein uL22 from Clostridium kluyveri (strain NBRC 12016).